We begin with the raw amino-acid sequence, 728 residues long: Catalase-peroxidase 1 (728 aa).

An N-terminal signal peptide occupies residues 1–22; sequence MDKTQSSQGKCPVMHGANSAVA. A cross-link (tryptophyl-tyrosyl-methioninium (Trp-Tyr) (with M-251)) is located at residues 97 to 225; it reads WHSAGTYRVA…LAAVMMGLIY (129 aa). The active-site Proton acceptor is the His98. The segment at residues 225–251 is a cross-link (tryptophyl-tyrosyl-methioninium (Tyr-Met) (with W-97)); that stretch reads YVNPEGVDGKPDPLRTAQDVRVTFARM. Position 266 (His266) interacts with heme b.

It belongs to the peroxidase family. Peroxidase/catalase subfamily. As to quaternary structure, homodimer or homotetramer. Requires heme b as cofactor. In terms of processing, formation of the three residue Trp-Tyr-Met cross-link is important for the catalase, but not the peroxidase activity of the enzyme.

The catalysed reaction is H2O2 + AH2 = A + 2 H2O. The enzyme catalyses 2 H2O2 = O2 + 2 H2O. In terms of biological role, bifunctional enzyme with both catalase and broad-spectrum peroxidase activity. This chain is Catalase-peroxidase 1, found in Shewanella sp. (strain ANA-3).